The following is a 404-amino-acid chain: Probable tRNA sulfurtransferase (404 aa).

The 106-residue stretch at 60–165 (TAVAESLKQV…EEAAYLSYET (106 aa)) folds into the THUMP domain. ATP is bound by residues 183 to 184 (ML), 208 to 209 (HF), Arg-265, Gly-287, and Gln-296.

This sequence belongs to the ThiI family.

The protein localises to the cytoplasm. The enzyme catalyses [ThiI sulfur-carrier protein]-S-sulfanyl-L-cysteine + a uridine in tRNA + 2 reduced [2Fe-2S]-[ferredoxin] + ATP + H(+) = [ThiI sulfur-carrier protein]-L-cysteine + a 4-thiouridine in tRNA + 2 oxidized [2Fe-2S]-[ferredoxin] + AMP + diphosphate. It catalyses the reaction [ThiS sulfur-carrier protein]-C-terminal Gly-Gly-AMP + S-sulfanyl-L-cysteinyl-[cysteine desulfurase] + AH2 = [ThiS sulfur-carrier protein]-C-terminal-Gly-aminoethanethioate + L-cysteinyl-[cysteine desulfurase] + A + AMP + 2 H(+). It functions in the pathway cofactor biosynthesis; thiamine diphosphate biosynthesis. In terms of biological role, catalyzes the ATP-dependent transfer of a sulfur to tRNA to produce 4-thiouridine in position 8 of tRNAs, which functions as a near-UV photosensor. Also catalyzes the transfer of sulfur to the sulfur carrier protein ThiS, forming ThiS-thiocarboxylate. This is a step in the synthesis of thiazole, in the thiamine biosynthesis pathway. The sulfur is donated as persulfide by IscS. This chain is Probable tRNA sulfurtransferase, found in Streptococcus pneumoniae serotype 2 (strain D39 / NCTC 7466).